A 391-amino-acid polypeptide reads, in one-letter code: Aspartate aminotransferase (391 aa).

Residues Gly40 and Asn176 each coordinate L-aspartate. Residue Lys236 is modified to N6-(pyridoxal phosphate)lysine. Arg366 is an L-aspartate binding site.

Belongs to the class-I pyridoxal-phosphate-dependent aminotransferase family. Homodimer. The cofactor is pyridoxal 5'-phosphate.

It is found in the cytoplasm. The enzyme catalyses L-aspartate + 2-oxoglutarate = oxaloacetate + L-glutamate. This Pyrococcus horikoshii (strain ATCC 700860 / DSM 12428 / JCM 9974 / NBRC 100139 / OT-3) protein is Aspartate aminotransferase (aspC).